A 151-amino-acid chain; its full sequence is FUN14 domain-containing protein 2 (151 aa).

The Cytoplasmic segment spans residues Met-1–Lys-42. Residues Tyr-43–Phe-63 traverse the membrane as a helical segment. At Gln-64–Leu-69 the chain is on the mitochondrial intermembrane side. Residues Ala-70 to Ile-90 traverse the membrane as a helical segment. Topologically, residues Lys-91–Glu-126 are cytoplasmic. Residues Val-127–Leu-147 form a helical membrane-spanning segment. Residues Gly-148–Ser-151 are Mitochondrial intermembrane-facing.

The protein belongs to the FUN14 family. As to expression, highly expressed in platelet (at protein level). Expressed in liver, brain, heart and muscle.

The protein localises to the mitochondrion outer membrane. Its subcellular location is the nucleus. Functionally, binds directly and specifically 1,2-Diacyl-sn-glycero-3-phospho-(1'-myo-inositol-3',4',5'-bisphosphate) (PIP3) leading to the recruitment of PIP3 to mitochondria and may play a role in the regulation of the platelet activation via AKT/GSK3B/cGMP signaling pathways. May act as transcription factor that regulates SREBP1 (isoform SREBP-1C) expression in order to modulate triglyceride (TG) homeostasis in hepatocytes. The protein is FUN14 domain-containing protein 2 of Mus musculus (Mouse).